Reading from the N-terminus, the 508-residue chain is Photosystem II CP47 reaction center protein (508 aa).

6 helical membrane passes run serine 21–serine 36, isoleucine 101–tryptophan 115, glycine 140–phenylalanine 156, isoleucine 203–serine 218, valine 237–valine 252, and serine 457–arginine 472.

This sequence belongs to the PsbB/PsbC family. PsbB subfamily. In terms of assembly, PSII is composed of 1 copy each of membrane proteins PsbA, PsbB, PsbC, PsbD, PsbE, PsbF, PsbH, PsbI, PsbJ, PsbK, PsbL, PsbM, PsbT, PsbX, PsbY, PsbZ, Psb30/Ycf12, at least 3 peripheral proteins of the oxygen-evolving complex and a large number of cofactors. It forms dimeric complexes. It depends on Binds multiple chlorophylls. PSII binds additional chlorophylls, carotenoids and specific lipids. as a cofactor.

The protein localises to the plastid. The protein resides in the chloroplast thylakoid membrane. Functionally, one of the components of the core complex of photosystem II (PSII). It binds chlorophyll and helps catalyze the primary light-induced photochemical processes of PSII. PSII is a light-driven water:plastoquinone oxidoreductase, using light energy to abstract electrons from H(2)O, generating O(2) and a proton gradient subsequently used for ATP formation. The chain is Photosystem II CP47 reaction center protein from Nymphaea alba (White water-lily).